The primary structure comprises 612 residues: Zinc metalloproteinase-disintegrin-like berythractivase (612 aa).

The signal sequence occupies residues 1 to 20 (MIQVLLVIICLEAFPYQGSS). A propeptide spanning residues 21 to 187 (IILESGNVND…EPIKKASLLN (167 aa)) is cleaved from the precursor. Residues 200–396 (KYVEFVVVLD…NRPQCLLNKP (197 aa)) form the Peptidase M12B domain. Glutamate 203 contacts Ca(2+). Residue asparagine 260 is glycosylated (N-linked (GlcNAc...) asparagine). Aspartate 287 contacts Ca(2+). Intrachain disulfides connect cysteine 311/cysteine 391, cysteine 351/cysteine 375, and cysteine 353/cysteine 358. Zn(2+) is bound at residue histidine 336. Glutamate 337 is an active-site residue. 2 residues coordinate Zn(2+): histidine 340 and histidine 346. The N-linked (GlcNAc...) asparagine glycan is linked to asparagine 348. A glycan (N-linked (GlcNAc...) asparagine) is linked at asparagine 374. Residues cysteine 391, asparagine 394, valine 406, asparagine 409, leucine 411, glutamate 413, glutamate 416, and aspartate 419 each contribute to the Ca(2+) site. Residues 404–490 (PPVCGNELLE…DCPMDDFQRN (87 aa)) form the Disintegrin domain. 14 cysteine pairs are disulfide-bonded: cysteine 407-cysteine 436, cysteine 418-cysteine 431, cysteine 420-cysteine 426, cysteine 430-cysteine 453, cysteine 444-cysteine 450, cysteine 449-cysteine 475, cysteine 462-cysteine 482, cysteine 469-cysteine 501, cysteine 494-cysteine 506, cysteine 513-cysteine 563, cysteine 528-cysteine 574, cysteine 541-cysteine 551, cysteine 558-cysteine 600, and cysteine 594-cysteine 605. A glycan (N-linked (GlcNAc...) asparagine) is linked at asparagine 432. Residues 468 to 470 (DCD) carry the D/ECD-tripeptide motif. Aspartate 470, leucine 471, glutamate 473, and aspartate 485 together coordinate Ca(2+).

This sequence belongs to the venom metalloproteinase (M12B) family. P-III subfamily. P-IIIa sub-subfamily. In terms of assembly, monomer. Zn(2+) is required as a cofactor. In terms of processing, highly glycosylated. In terms of tissue distribution, expressed by the venom gland.

Its subcellular location is the secreted. Inhibited by EDTA and o-phenanthroline. Not inhibited by PMSF, benzamidine, irreversible serine-proteinase inhibitors and cysteine proteinase inhibitor E-64. In terms of biological role, potent activator of prothrombin (F2). Does not elicit any hemorrhagic response. Barely inhibits collagen-induced platelet aggregation. Binds neither collagen, nor the jararhagin monoclonal antibody MAJar3. Hydrolyzes the Aalpha-chain of fibrin and fibrinogen, without affecting the Bbeta- and gamma-chains. Is capable of triggering endothelial pro-inflammatory and procoagulant cell responses, but fails to trigger apoptosis. Induces von Willebrand factor release, and the expression of both ICAM1 and E-selectin (SELE) (without increase in VCAM1) in endothelial cells (HUVEC). Is also able to up-regulate the synthesis of the coagulation factor TF (F3). Enhances nitric oxide (NO) generation, prostacyclin production and interleukin-8 release. The chain is Zinc metalloproteinase-disintegrin-like berythractivase from Bothrops erythromelas (Caatinga lance head).